We begin with the raw amino-acid sequence, 282 residues long: MEAENGEVAALVEKITGLHAAISKLPALSPSPQVDALFTELVAACVPSSPVDVTKLGPEAQEMRQDLIRLCSAAEGLLEAHYSDMLTALDSPLDHLGRFPYFDNYVNLSKLEHDLLAGHVAAPARVAFIGSGPLPFSSLFLATYHLPDTRFDNYDRCSVANGRAMKLVGAADEGVRSRMAFHTAEVTDLTAELGAYDVVFLAALVGMTSKEKADAIAHLGKHMADGAVLVREALHGARAFLYPVVELDDVGRGGFQVLAVHHPAGDEVFNSFIVARKVKMSA.

The protein belongs to the nicotianamine synthase (NAS)-like family.

The protein is Nicotianamine synthase-like 5 protein (NAS5) of Hordeum vulgare (Barley).